The primary structure comprises 314 residues: NAD-dependent protein lipoamidase sirtuin-4, mitochondrial (314 aa).

The transit peptide at 1-28 (MKMSFALTFRSAKGRWIANPSQPCSKAS) directs the protein to the mitochondrion. Residues 37-314 (PPLDPEKVKE…GELLPLIDPC (278 aa)) form the Deacetylase sirtuin-type domain. Residues 62 to 82 (GAGISTESGIPDYRSEKVGLY) and 143 to 146 (QNVD) contribute to the NAD(+) site. Residue His161 is the Proton acceptor of the active site. The Zn(2+) site is built by Cys169, Cys172, Cys220, and Cys223. NAD(+) is bound by residues 260-262 (GSS), 286-288 (NIG), and Cys304.

The protein belongs to the sirtuin family. Class II subfamily. As to quaternary structure, interacts with GLUD1, IDE and SLC25A5. Interacts with DLAT and PDHX. Interacts with MCCC1 (via the biotin carboxylation domain). Interacts with PCCA and PC. Zn(2+) is required as a cofactor. As to expression, detected in vascular smooth muscle and striated muscle. Detected in insulin-producing beta-cells in pancreas islets of Langerhans (at protein level). Widely expressed. Weakly expressed in leukocytes and fetal thymus.

It localises to the mitochondrion matrix. The catalysed reaction is N(6)-[(R)-lipoyl]-L-lysyl-[protein] + NAD(+) + H2O = 2''-O-lipoyl-ADP-D-ribose + nicotinamide + L-lysyl-[protein]. It catalyses the reaction N(6)-biotinyl-L-lysyl-[protein] + NAD(+) + H2O = 2''-O-biotinyl-ADP-D-ribose + nicotinamide + L-lysyl-[protein]. It carries out the reaction N(6)-acetyl-L-lysyl-[protein] + NAD(+) + H2O = 2''-O-acetyl-ADP-D-ribose + nicotinamide + L-lysyl-[protein]. The enzyme catalyses L-cysteinyl-[protein] + NAD(+) = S-(ADP-D-ribosyl)-L-cysteinyl-[protein] + nicotinamide + H(+). Functionally, acts as a NAD-dependent protein lipoamidase, biotinylase, deacetylase and ADP-ribosyl transferase. Catalyzes more efficiently removal of lipoyl- and biotinyl- than acetyl-lysine modifications. Inhibits the pyruvate dehydrogenase complex (PDH) activity via the enzymatic hydrolysis of the lipoamide cofactor from the E2 component, DLAT, in a phosphorylation-independent manner. Catalyzes the transfer of ADP-ribosyl groups onto target proteins, including mitochondrial GLUD1, inhibiting GLUD1 enzyme activity. Acts as a negative regulator of mitochondrial glutamine metabolism by mediating mono ADP-ribosylation of GLUD1: expressed in response to DNA damage and negatively regulates anaplerosis by inhibiting GLUD1, leading to block metabolism of glutamine into tricarboxylic acid cycle and promoting cell cycle arrest. In response to mTORC1 signal, SIRT4 expression is repressed, promoting anaplerosis and cell proliferation. Acts as a tumor suppressor. Also acts as a NAD-dependent protein deacetylase: mediates deacetylation of 'Lys-471' of MLYCD, inhibiting its activity, thereby acting as a regulator of lipid homeostasis. Does not seem to deacetylate PC. Controls fatty acid oxidation by inhibiting PPARA transcriptional activation. Impairs SIRT1-PPARA interaction probably through the regulation of NAD(+) levels. Down-regulates insulin secretion. The protein is NAD-dependent protein lipoamidase sirtuin-4, mitochondrial of Homo sapiens (Human).